The primary structure comprises 98 residues: Co-chaperonin GroES (98 aa).

It belongs to the GroES chaperonin family. As to quaternary structure, heptamer of 7 subunits arranged in a ring. Interacts with the chaperonin GroEL.

The protein resides in the cytoplasm. In terms of biological role, together with the chaperonin GroEL, plays an essential role in assisting protein folding. The GroEL-GroES system forms a nano-cage that allows encapsulation of the non-native substrate proteins and provides a physical environment optimized to promote and accelerate protein folding. GroES binds to the apical surface of the GroEL ring, thereby capping the opening of the GroEL channel. This is Co-chaperonin GroES from Leifsonia xyli subsp. xyli (strain CTCB07).